The following is a 112-amino-acid chain: UPF0342 protein STER_0693 (112 aa).

It belongs to the UPF0342 family.

This Streptococcus thermophilus (strain ATCC BAA-491 / LMD-9) protein is UPF0342 protein STER_0693.